The sequence spans 249 residues: MKIIISPARTMQVDTDSLLYKDLPEFLQQTKDILGWMRSLSYDELHKVWGNCSSRLAMKNYQWLQQMDLQRKLTPAIIAFTGLQYQYMAPSVFSEDGLKYVQDNLRILSGFYGILRPFDGIIPYRLGMGDMAPVNGYKNLYDFWGEQLYHELYKNNDLVISLASVEYEKAITPYLQTQDRFIKCIFGEEINGKIKQKATLAKMARGNMVRYLAENQIQTIEGVKQFNIGGYRFREDLSTDEKLVFELVK.

The protein belongs to the UPF0246 family.

The polypeptide is UPF0246 protein Lreu_0493 (Limosilactobacillus reuteri (strain DSM 20016) (Lactobacillus reuteri)).